The chain runs to 358 residues: Phosphoserine aminotransferase (358 aa).

Arginine 41 is a binding site for L-glutamate. Pyridoxal 5'-phosphate is bound by residues 75 to 76 (AS), tryptophan 100, threonine 148, aspartate 167, and glutamine 190. Residue lysine 191 is modified to N6-(pyridoxal phosphate)lysine. 233-234 (NT) is a binding site for pyridoxal 5'-phosphate.

Belongs to the class-V pyridoxal-phosphate-dependent aminotransferase family. SerC subfamily. As to quaternary structure, homodimer. Requires pyridoxal 5'-phosphate as cofactor.

It localises to the cytoplasm. It carries out the reaction O-phospho-L-serine + 2-oxoglutarate = 3-phosphooxypyruvate + L-glutamate. The enzyme catalyses 4-(phosphooxy)-L-threonine + 2-oxoglutarate = (R)-3-hydroxy-2-oxo-4-phosphooxybutanoate + L-glutamate. Its pathway is amino-acid biosynthesis; L-serine biosynthesis; L-serine from 3-phospho-D-glycerate: step 2/3. It functions in the pathway cofactor biosynthesis; pyridoxine 5'-phosphate biosynthesis; pyridoxine 5'-phosphate from D-erythrose 4-phosphate: step 3/5. Functionally, catalyzes the reversible conversion of 3-phosphohydroxypyruvate to phosphoserine and of 3-hydroxy-2-oxo-4-phosphonooxybutanoate to phosphohydroxythreonine. This is Phosphoserine aminotransferase from Campylobacter jejuni subsp. doylei (strain ATCC BAA-1458 / RM4099 / 269.97).